Here is a 1674-residue protein sequence, read N- to C-terminus: Kinesin-like protein KIF21A (1674 aa).

An N-acetylmethionine modification is found at M1. Positions 9 to 371 (SVRVAVRIRP…LKYANRARNI (363 aa)) constitute a Kinesin motor domain. ATP is bound at residue 88–95 (GQTGAGKT). Residues 365–575 (ANRARNIKNK…NREERSVAGK (211 aa)) adopt a coiled-coil conformation. S524 is modified (phosphoserine). 3 disordered regions span residues 556–641 (KKRL…DEKA), 779–804 (EEQE…DQRK), and 841–881 (SDKV…AQQK). Positions 560 to 597 (QKLEESNREERSVAGKEDNTDTDQEKKEEKGVSERENN) are enriched in basic and acidic residues. Residues 598-637 (ELEVEESQEVSDHEDEEEEEEEEEDDIDGGESSDESDSES) show a composition bias toward acidic residues. The segment covering 851–865 (KLSSSDAPAQDTGSS) has biased composition (polar residues). Coiled coils occupy residues 931-1019 (TDII…AKEE) and 1053-1083 (LQAA…NQLL). A disordered region spans residues 1116-1138 (VEDSTDEDAPLNSPGSEGSTLSS). Positions 1128–1138 (SPGSEGSTLSS) are enriched in polar residues. The segment at 1146-1167 (EVKPKNKARRRTTTQMELLYAD) is interaction with KANK1 and KANK2. 2 stretches are compositionally biased toward polar residues: residues 1170–1179 (ELASDTSTGD) and 1196–1205 (GMNTETSGTS). A disordered region spans residues 1170–1318 (ELASDTSTGD…SSLSEVHRSS (149 aa)). Phosphoserine is present on residues S1212, S1225, S1229, and S1239. A compositionally biased stretch (basic and acidic residues) spans 1245–1262 (KAYEKAEKSKAKEQKHSD). Residues 1288–1297 (NRLTVSQGNT) are compositionally biased toward polar residues. WD repeat units follow at residues 1345 to 1382 (GHTK…EIMS), 1385 to 1423 (GHPN…KCIR), 1449 to 1487 (SGEN…STGK), 1490 to 1532 (GHLG…LGTV), 1541 to 1578 (PHYD…LLQQ), 1582 to 1621 (AHKD…PVGE), and 1624 to 1661 (GHDS…DGQI). Position 1662 is a phosphoserine (S1662). Phosphothreonine is present on T1664. At S1673 the chain carries Phosphoserine.

The protein belongs to the TRAFAC class myosin-kinesin ATPase superfamily. Kinesin family. As to quaternary structure, part of a cortical microtubule stabilization complex (CMSC) composed of KANK1, PPFIA1, PPFIBP1, ERC1/ELKS, PHLDB2/LL5beta, CLASPs, KIF21A and possibly additional interactors; within CMSCs KANK1 and PHLDB2/LL5beta seem to be the core components for recruiting microtubule-binding proteins KIF21A and CLASPs, whereas PPFIA1, PPFIBP1 and ERC1/ELKS serve as scaffolds for protein clustering. Interacts (via residues 1146-1167) with KANK1 (via ankyrin repeats 1-5) and KANK2 (via ankyrin repeats 1-5).

Its subcellular location is the cytoplasm. The protein localises to the cytoskeleton. It localises to the cell cortex. It is found in the cell projection. The protein resides in the axon. Its subcellular location is the dendrite. The protein localises to the growth cone. Functionally, processive microtubule plus-end directed motor protein involved in neuronal axon guidance. Is recruited by KANK1 to cortical microtubule stabilizing complexes (CMSCs) at focal adhesions (FAs) rims where it promotes microtubule capture and stability. Controls microtubule polymerization rate at axonal growth cones and suppresses microtubule growth without inducing microtubule disassembly once it reaches the cell cortex. This chain is Kinesin-like protein KIF21A (KIF21A), found in Homo sapiens (Human).